The following is a 453-amino-acid chain: Tubulin alpha chain (453 aa).

Q11 lines the GTP pocket. The residue at position 40 (K40) is an N6-acetyllysine. GTP is bound by residues E71, G144, T145, T179, N206, and N228. E71 lines the Mg(2+) pocket. E254 is a catalytic residue.

Belongs to the tubulin family. As to quaternary structure, dimer of alpha and beta chains. A typical microtubule is a hollow water-filled tube with an outer diameter of 25 nm and an inner diameter of 15 nM. Alpha-beta heterodimers associate head-to-tail to form protofilaments running lengthwise along the microtubule wall with the beta-tubulin subunit facing the microtubule plus end conferring a structural polarity. Microtubules usually have 13 protofilaments but different protofilament numbers can be found in some organisms and specialized cells. Mg(2+) is required as a cofactor. In terms of processing, undergoes a tyrosination/detyrosination cycle, the cyclic removal and re-addition of a C-terminal tyrosine residue by the enzymes tubulin tyrosine carboxypeptidase (TTCP) and tubulin tyrosine ligase (TTL), respectively. Acetylation of alpha chains at Lys-40 stabilizes microtubules and affects affinity and processivity of microtubule motors. This modification has a role in multiple cellular functions, ranging from cell motility, cell cycle progression or cell differentiation to intracellular trafficking and signaling.

It localises to the cytoplasm. The protein localises to the cytoskeleton. The enzyme catalyses GTP + H2O = GDP + phosphate + H(+). Functionally, tubulin is the major constituent of microtubules, a cylinder consisting of laterally associated linear protofilaments composed of alpha- and beta-tubulin heterodimers. Microtubules grow by the addition of GTP-tubulin dimers to the microtubule end, where a stabilizing cap forms. Below the cap, tubulin dimers are in GDP-bound state, owing to GTPase activity of alpha-tubulin. This chain is Tubulin alpha chain, found in Plasmodium falciparum (isolate K1 / Thailand).